Reading from the N-terminus, the 173-residue chain is Small ribosomal subunit protein uS5 (173 aa).

The S5 DRBM domain occupies 17–80 (WQERVIQIRR…ADGKKQLIDV (64 aa)).

It belongs to the universal ribosomal protein uS5 family. As to quaternary structure, part of the 30S ribosomal subunit. Contacts proteins S4 and S8.

Functionally, with S4 and S12 plays an important role in translational accuracy. In terms of biological role, located at the back of the 30S subunit body where it stabilizes the conformation of the head with respect to the body. The sequence is that of Small ribosomal subunit protein uS5 from Rippkaea orientalis (strain PCC 8801 / RF-1) (Cyanothece sp. (strain PCC 8801)).